The primary structure comprises 469 residues: MAKTLYEKLFDAHVVYEAAGETPILYINRHLIHEVTSPQAFDGLRVAGRQVRQIGKTFGTMDHSISTQVRDVNKLEGQAKIQVLELAKNCEASGISLFDMQTKEQGIVHVMGPEQGLTLPGMTIVCGDSHTATHGAFGALAFGIGTSEVEHVLATQTLKQARAKSMKVEVRGKVNPGITAKDIVLAIIGKTTMAGGTGHVVEFYGEAIRDLSMEGRMTVCNMAIEFGAKAGLVAPDETTFAYLKDRPHAPKGKDWDDAVEYWKTLKSDDDAVFDSVVVLEAKDIAPQVTWGTNPGQVIGIDQVVPNPQEMADPVTKASAEKALAYIGLDANTDMKNIPVDQVFIGSCTNSRIEDLRAAAAVMKGRKKADNVKRVLVVPGSGLVKEQAEKEGLDKIFIEAGAEWRNPGCSMCLGMNDDRLGEWERCASTSNRNFEGRQGRNGRTHLVSPAMAAAAAMFGKFVDIRHVELN.

[4Fe-4S] cluster contacts are provided by Cys-347, Cys-408, and Cys-411.

Belongs to the aconitase/IPM isomerase family. LeuC type 1 subfamily. In terms of assembly, heterodimer of LeuC and LeuD. Requires [4Fe-4S] cluster as cofactor.

The enzyme catalyses (2R,3S)-3-isopropylmalate = (2S)-2-isopropylmalate. It functions in the pathway amino-acid biosynthesis; L-leucine biosynthesis; L-leucine from 3-methyl-2-oxobutanoate: step 2/4. Its function is as follows. Catalyzes the isomerization between 2-isopropylmalate and 3-isopropylmalate, via the formation of 2-isopropylmaleate. The protein is 3-isopropylmalate dehydratase large subunit of Actinobacillus pleuropneumoniae serotype 3 (strain JL03).